A 461-amino-acid chain; its full sequence is Glutamyl-tRNA reductase (461 aa).

Substrate is bound by residues 50–53, Ser-111, 116–118, and Gln-122; these read TCNR and EPQ. The Nucleophile role is filled by Cys-51. 191 to 196 contributes to the NADP(+) binding site; that stretch reads GAGEMA.

Belongs to the glutamyl-tRNA reductase family. Homodimer.

The enzyme catalyses (S)-4-amino-5-oxopentanoate + tRNA(Glu) + NADP(+) = L-glutamyl-tRNA(Glu) + NADPH + H(+). It participates in porphyrin-containing compound metabolism; protoporphyrin-IX biosynthesis; 5-aminolevulinate from L-glutamyl-tRNA(Glu): step 1/2. In terms of biological role, catalyzes the NADPH-dependent reduction of glutamyl-tRNA(Glu) to glutamate 1-semialdehyde (GSA). The protein is Glutamyl-tRNA reductase of Syntrophobacter fumaroxidans (strain DSM 10017 / MPOB).